The following is a 268-amino-acid chain: Tryptophan synthase alpha chain (268 aa).

Residues E49 and D60 each act as proton acceptor in the active site.

The protein belongs to the TrpA family. As to quaternary structure, tetramer of two alpha and two beta chains.

The enzyme catalyses (1S,2R)-1-C-(indol-3-yl)glycerol 3-phosphate + L-serine = D-glyceraldehyde 3-phosphate + L-tryptophan + H2O. The protein operates within amino-acid biosynthesis; L-tryptophan biosynthesis; L-tryptophan from chorismate: step 5/5. In terms of biological role, the alpha subunit is responsible for the aldol cleavage of indoleglycerol phosphate to indole and glyceraldehyde 3-phosphate. The polypeptide is Tryptophan synthase alpha chain (Xanthomonas oryzae pv. oryzae (strain MAFF 311018)).